The primary structure comprises 68 residues: Large ribosomal subunit protein uL29 (68 aa).

The protein belongs to the universal ribosomal protein uL29 family.

This is Large ribosomal subunit protein uL29 from Bradyrhizobium sp. (strain BTAi1 / ATCC BAA-1182).